A 728-amino-acid polypeptide reads, in one-letter code: Fibulin-1 (728 aa).

The signal sequence occupies residues 1–17 (MRICFLLLAFLVAETFA). 30 disulfides stabilise this stretch: cysteine 23–cysteine 49, cysteine 24–cysteine 56, cysteine 37–cysteine 57, cysteine 66–cysteine 94, cysteine 79–cysteine 95, cysteine 97–cysteine 121, cysteine 98–cysteine 128, cysteine 111–cysteine 129, cysteine 159–cysteine 168, cysteine 164–cysteine 178, cysteine 180–cysteine 279, cysteine 285–cysteine 298, cysteine 292–cysteine 307, cysteine 347–cysteine 359, cysteine 353–cysteine 368, cysteine 375–cysteine 388, cysteine 394–cysteine 404, cysteine 399–cysteine 413, cysteine 415–cysteine 428, cysteine 434–cysteine 448, cysteine 442–cysteine 457, cysteine 459–cysteine 472, cysteine 478–cysteine 489, cysteine 485–cysteine 498, cysteine 500–cysteine 513, cysteine 519–cysteine 534, cysteine 530–cysteine 543, cysteine 545–cysteine 558, cysteine 564–cysteine 576, and cysteine 569–cysteine 585. Anaphylatoxin-like domains follow at residues 23–64 (CCAG…LLDN), 65–96 (ACDS…ECCD), and 97–129 (CCLL…NKCC). Residues 155-194 (LGDRCASSHCEHLCHDRGGEKVECSCRSGFDLAPDGMACV) enclose the EGF-like 1 domain. An EGF-like 2; calcium-binding domain is found at 195-280 (DRNECLTRQS…GWLFQHGHCV (86 aa)). The EGF-like 3; calcium-binding domain maps to 281 to 344 (DVDECNLGSH…YPKNGMCNDI (64 aa)). The region spanning 343-389 (DIDECVTGHNCGAGEECVNTPGSFRCQQKGNLCAHGYEVNGATGFCE) is the EGF-like 4; calcium-binding domain. The 40-residue stretch at 390–429 (DVNECQQGVCGSMECINLPGTYKCKCGPGYEFNDAKKRCE) folds into the EGF-like 5; calcium-binding domain. The region spanning 430–473 (DVDECIKFAGHVCDLSAECINTIGSFECKCKPGFQLASDGRRCE) is the EGF-like 6; calcium-binding domain. The 41-residue stretch at 474–514 (DVNECTTGIAACEQKCVNIPGSYQCICDRGFALGPDGTKCE) folds into the EGF-like 7; calcium-binding domain. One can recognise an EGF-like 8; calcium-binding domain in the interval 515–559 (DIDECSIWAGSGNDLCMGGCINTKGSYLCQCPPGYKIQPDGRTCV). The EGF-like 9; calcium-binding domain occupies 560 to 610 (DVDECAMGECAGSDKVCVNTLGSFKCHSIDCPTNYIHDSLNKNQIADGYSC). N-linked (GlcNAc...) asparagine glycosylation is present at asparagine 624.

This sequence belongs to the fibulin family. In terms of assembly, homomultimerizes and interacts with various extracellular matrix components. In terms of tissue distribution, expressed in head muscle cells, anterior and posterior intestinal cells. Isoform a: Expressed in male and hermaphrodite gonad, anterior and posterior intestine and pharyngeal basement membranes, body-wall muscle, GLR cells, uterine attachment and mechanosensory neurons. Isoform c: Expressed on ALM/PLM mechanosensory neuron attachments, in flexible tracks connecting the pharyngeal, body-wall-muscle basement membranes and in uterine attachments.

Its subcellular location is the secreted. The protein resides in the extracellular space. It localises to the extracellular matrix. It is found in the basement membrane. Its function is as follows. Incorporated into fibronectin-containing matrix fibers. Plays a role in cell adhesion and migration along protein fibers within the extracellular matrix (ECM). Important for certain developmental processes and contributes to the supramolecular organization of ECM architecture, in particular to those of basement membranes. Involved in regulating the shape and adhesion of cells in the developing pharynx, intestine, body-wall muscle and gonadal tissue. During gonadogenesis, regulates the width of gonads and the migration of distal tip cells (DTC). Together with type IV collagen let-2 and downstream of metalloprotease mig-17, recruits nidogen nid-1 to the gonad basement membrane thereby inducing basement membrane remodeling required for the directional migration of DTCs. Acts antagonistically with metalloprotease gon-1 to maintain optimal levels of type IV collagen emb-9 in the gonad basement membrane during gonadogenesis. Required for larval development. In terms of biological role, involved in the assembly of the flexible hemicentin-containing tracks found joining the pharynx and body-wall-muscle basement membranes. The chain is Fibulin-1 (fbl-1) from Caenorhabditis elegans.